We begin with the raw amino-acid sequence, 308 residues long: Putative S-adenosyl-L-methionine-dependent methyltransferase MAB_4585c (308 aa).

S-adenosyl-L-methionine contacts are provided by residues Asp-131 and 160–161 (DL).

This sequence belongs to the UPF0677 family.

In terms of biological role, exhibits S-adenosyl-L-methionine-dependent methyltransferase activity. The chain is Putative S-adenosyl-L-methionine-dependent methyltransferase MAB_4585c from Mycobacteroides abscessus (strain ATCC 19977 / DSM 44196 / CCUG 20993 / CIP 104536 / JCM 13569 / NCTC 13031 / TMC 1543 / L948) (Mycobacterium abscessus).